A 193-amino-acid polypeptide reads, in one-letter code: 3-isopropylmalate dehydratase small subunit (193 aa).

The protein belongs to the LeuD family. LeuD type 1 subfamily. As to quaternary structure, heterodimer of LeuC and LeuD.

The enzyme catalyses (2R,3S)-3-isopropylmalate = (2S)-2-isopropylmalate. It participates in amino-acid biosynthesis; L-leucine biosynthesis; L-leucine from 3-methyl-2-oxobutanoate: step 2/4. In terms of biological role, catalyzes the isomerization between 2-isopropylmalate and 3-isopropylmalate, via the formation of 2-isopropylmaleate. In Listeria monocytogenes serotype 4b (strain CLIP80459), this protein is 3-isopropylmalate dehydratase small subunit.